The sequence spans 156 residues: MKCPKCSSTHSRVVDSRHADDANAIRRRRECENCGTRFTTFEHIEVSPLIVVKKDGTREQFLREKILNGLVRSCEKRPVRYQQLEDITNKVEWQLRDSGQTEISSRDIGEHVMNLLMHVDQVSYVRFASVYKEFKDVDQLLASMQGILNDNKRSDL.

The segment at Cys-3 to Cys-34 is a zinc-finger region. Residues Leu-49–Gln-139 enclose the ATP-cone domain.

The protein belongs to the NrdR family. Zn(2+) serves as cofactor.

Functionally, negatively regulates transcription of bacterial ribonucleotide reductase nrd genes and operons by binding to NrdR-boxes. The sequence is that of Transcriptional repressor NrdR from Staphylococcus haemolyticus (strain JCSC1435).